The following is a 565-amino-acid chain: NAD-dependent malic enzyme (565 aa).

Tyr-103 functions as the Proton donor in the catalytic mechanism. The active-site Proton acceptor is Lys-177. 3 residues coordinate a divalent metal cation: Glu-248, Asp-249, and Asp-272. Asp-272 and Asn-419 together coordinate NAD(+). Ser-445 carries the post-translational modification Phosphoserine.

This sequence belongs to the malic enzymes family. It depends on Mg(2+) as a cofactor. Mn(2+) serves as cofactor.

It carries out the reaction (S)-malate + NAD(+) = pyruvate + CO2 + NADH. The catalysed reaction is oxaloacetate + H(+) = pyruvate + CO2. This chain is NAD-dependent malic enzyme (mae2), found in Schizosaccharomyces pombe (strain 972 / ATCC 24843) (Fission yeast).